A 100-amino-acid chain; its full sequence is Small ribosomal subunit protein uS14c (100 aa).

Belongs to the universal ribosomal protein uS14 family. In terms of assembly, part of the 30S ribosomal subunit.

Its subcellular location is the plastid. The protein localises to the chloroplast. Binds 16S rRNA, required for the assembly of 30S particles. This is Small ribosomal subunit protein uS14c from Liriodendron tulipifera (Tuliptree).